Consider the following 943-residue polypeptide: Lactoferrin-binding protein A (943 aa).

The signal sequence occupies residues 1-27 (MNKKHGFPLTLTALAIATAFPAYAAQA). Positions 52-178 (RRSKEATGLG…LGGAVAFRTK (127 aa)) constitute a TBDR plug domain. The TBDR beta-barrel domain occupies 189–943 (SWGIQAKTAY…NFSLALEMKF (755 aa)). The TonB C-terminal box signature appears at 926-943 (GRYAAPGRNFSLALEMKF).

It belongs to the TonB-dependent receptor family.

It localises to the cell outer membrane. Functionally, unknown. May be an iron-siderophore receptor. This is Lactoferrin-binding protein A (lbpA) from Neisseria meningitidis serogroup B (strain ATCC BAA-335 / MC58).